The chain runs to 621 residues: F-box/LRR-repeat protein 4 (621 aa).

The residue at position 28 (Arg-28) is an Asymmetric dimethylarginine. In terms of domain architecture, F-box spans 277 to 332; sequence NGYFDKLPYELIQLILNHLTLPDLCRLAQTCKLLNQHCCDPLQYIHLNLQPYWAKL. 9 LRR repeats span residues 376-397, 402-421, 427-448, 452-474, 480-501, 504-524, 532-558, 559-583, and 584-609; these read ELVR…EIIS, NLQD…AFSH, GLKR…SILN, DLQH…ASMI, KLRT…AELA, CPLL…STGC, LPNL…ASNC, TRLR…LLES, and CKDL…LSAS.

Part of a SCF (SKP1-CUL1-F-box) protein ligase complex. Interacts with FAF2 and VCP. Interacts with PPTC7; this interaction promotes destruction of BNIP3 and NIX and mitophagy suppression.

Its subcellular location is the cytoplasm. It is found in the nucleus. It localises to the mitochondrion outer membrane. In terms of biological role, substrate-recognition component of the mitochondria-localized SCF-FBXL4 ubiquitin E3 ligase complex that plays a role in the restriction of mitophagy by controlling the degradation of BNIP3 and NIX mitophagy receptors. Also rescues mitochondrial injury through reverting hyperactivation of DRP1-mediated mitochondrial fission. The chain is F-box/LRR-repeat protein 4 (FBXL4) from Bos taurus (Bovine).